The chain runs to 729 residues: Fatty acid oxidation complex subunit alpha (729 aa).

The enoyl-CoA hydratase/isomerase stretch occupies residues Met-1–Asp-189. Residue Asp-296 participates in substrate binding. Residues Ala-311–Ala-729 form a 3-hydroxyacyl-CoA dehydrogenase region. NAD(+) is bound by residues Met-324, Asp-343, Val-400–Glu-402, Lys-407, and Ser-429. The active-site For 3-hydroxyacyl-CoA dehydrogenase activity is His-450. Asn-453 provides a ligand contact to NAD(+). Asn-500 and Tyr-660 together coordinate substrate.

The protein in the N-terminal section; belongs to the enoyl-CoA hydratase/isomerase family. In the C-terminal section; belongs to the 3-hydroxyacyl-CoA dehydrogenase family. As to quaternary structure, heterotetramer of two alpha chains (FadB) and two beta chains (FadA).

The enzyme catalyses a (3S)-3-hydroxyacyl-CoA + NAD(+) = a 3-oxoacyl-CoA + NADH + H(+). The catalysed reaction is a (3S)-3-hydroxyacyl-CoA = a (2E)-enoyl-CoA + H2O. It carries out the reaction a 4-saturated-(3S)-3-hydroxyacyl-CoA = a (3E)-enoyl-CoA + H2O. It catalyses the reaction (3S)-3-hydroxybutanoyl-CoA = (3R)-3-hydroxybutanoyl-CoA. The enzyme catalyses a (3Z)-enoyl-CoA = a 4-saturated (2E)-enoyl-CoA. The catalysed reaction is a (3E)-enoyl-CoA = a 4-saturated (2E)-enoyl-CoA. Its pathway is lipid metabolism; fatty acid beta-oxidation. Its function is as follows. Involved in the aerobic and anaerobic degradation of long-chain fatty acids via beta-oxidation cycle. Catalyzes the formation of 3-oxoacyl-CoA from enoyl-CoA via L-3-hydroxyacyl-CoA. It can also use D-3-hydroxyacyl-CoA and cis-3-enoyl-CoA as substrate. In Yersinia pestis bv. Antiqua (strain Antiqua), this protein is Fatty acid oxidation complex subunit alpha.